The following is a 689-amino-acid chain: Glycine--tRNA ligase beta subunit (689 aa).

Belongs to the class-II aminoacyl-tRNA synthetase family. As to quaternary structure, tetramer of two alpha and two beta subunits.

It is found in the cytoplasm. The enzyme catalyses tRNA(Gly) + glycine + ATP = glycyl-tRNA(Gly) + AMP + diphosphate. The polypeptide is Glycine--tRNA ligase beta subunit (Yersinia pseudotuberculosis serotype O:1b (strain IP 31758)).